The primary structure comprises 505 residues: Glycerol kinase (505 aa).

ADP is bound at residue Thr12. ATP is bound by residues Thr12, Thr13, and Ser14. Thr12 contacts sn-glycerol 3-phosphate. Residue Arg16 coordinates ADP. The sn-glycerol 3-phosphate site is built by Arg82, Glu83, Tyr134, and Asp249. Glycerol is bound by residues Arg82, Glu83, Tyr134, Asp249, and Gln250. Residues Thr271 and Gly315 each coordinate ADP. Residues Thr271, Gly315, Gln319, and Gly416 each contribute to the ATP site. Gly416 and Asn420 together coordinate ADP.

It belongs to the FGGY kinase family.

The catalysed reaction is glycerol + ATP = sn-glycerol 3-phosphate + ADP + H(+). It participates in polyol metabolism; glycerol degradation via glycerol kinase pathway; sn-glycerol 3-phosphate from glycerol: step 1/1. With respect to regulation, inhibited by fructose 1,6-bisphosphate (FBP). Key enzyme in the regulation of glycerol uptake and metabolism. Catalyzes the phosphorylation of glycerol to yield sn-glycerol 3-phosphate. The sequence is that of Glycerol kinase from Mycolicibacterium vanbaalenii (strain DSM 7251 / JCM 13017 / BCRC 16820 / KCTC 9966 / NRRL B-24157 / PYR-1) (Mycobacterium vanbaalenii).